Here is a 656-residue protein sequence, read N- to C-terminus: Receptor-type tyrosine-protein phosphatase R (656 aa).

Positions Met-1–Ser-23 are cleaved as a signal peptide. Ser-23 is a glycosylation site (O-linked (Xyl...) (chondroitin sulfate) serine). The Extracellular portion of the chain corresponds to Asn-25–Glu-225. An N-linked (GlcNAc...) asparagine glycan is attached at Asn-128. Residues Gly-226 to Tyr-248 traverse the membrane as a helical segment. The Cytoplasmic portion of the chain corresponds to Arg-249–Gln-656. Ser-271 bears the Phosphoserine mark. Ser-338 carries the post-translational modification Phosphoserine; by PKA. The 255-residue stretch at Leu-392–Phe-646 folds into the Tyrosine-protein phosphatase domain. Residues Asp-553, Cys-587 to Arg-593, and Gln-631 each bind substrate. Residue Cys-587 is the Phosphocysteine intermediate of the active site.

The protein belongs to the protein-tyrosine phosphatase family. Receptor class 7 subfamily. In terms of assembly, interacts with MAPKs. In terms of tissue distribution, widely expressed in the brain, most abundant in cerebellum, midbrain, cerebral cortex and hippocampus. Also expressed in heart and skeletal muscle.

The protein localises to the cytoplasm. The protein resides in the cell membrane. It carries out the reaction O-phospho-L-tyrosyl-[protein] + H2O = L-tyrosyl-[protein] + phosphate. Its function is as follows. Sequesters mitogen-activated protein kinases (MAPKs) such as MAPK1, MAPK3 and MAPK14 in the cytoplasm in an inactive form. The MAPKs bind to a dephosphorylated kinase interacting motif, phosphorylation of which by the protein kinase A complex releases the MAPKs for activation and translocation into the nucleus. The protein is Receptor-type tyrosine-protein phosphatase R (Ptprr) of Rattus norvegicus (Rat).